The following is a 603-amino-acid chain: DNA mismatch repair protein MutL (603 aa).

Residues 336–346 are compositionally biased toward basic and acidic residues; it reads EVSKKQKEQQK. Disordered stretches follow at residues 336-355 and 361-384; these read EVSK…MSFE and KETP…DTSR.

Belongs to the DNA mismatch repair MutL/HexB family.

In terms of biological role, this protein is involved in the repair of mismatches in DNA. It is required for dam-dependent methyl-directed DNA mismatch repair. May act as a 'molecular matchmaker', a protein that promotes the formation of a stable complex between two or more DNA-binding proteins in an ATP-dependent manner without itself being part of a final effector complex. In Listeria welshimeri serovar 6b (strain ATCC 35897 / DSM 20650 / CCUG 15529 / CIP 8149 / NCTC 11857 / SLCC 5334 / V8), this protein is DNA mismatch repair protein MutL.